The sequence spans 440 residues: MAENNENISKNVDVRPKTSRSRSADRKDGYVWSGKKLSWSKKSESYSDAETVNGIEKTEVSLRNQERKHSCSSIELDLDHSCGHRFLGRSLKQKLQDAVGQCFPIKNCSSRHSSGLPSKRKIHISELMLDKCPFPPRSDLAFRWHFIKRHTAPINSKSDEWVSTDLSQAELKDGQLKRRNMEESINCFSHTNVQPCVITTDNALCREGPITGSVMNLVSNNSIEDSDMDSDDEILTLCTSSRKRNKPKWELDDEILQLETPPKYHTQIDYVHCLVPDLLQINNNPCYWGVMDKYAAEALLEGKPEGTFLLRDSAQEDYLFSVSFRRYSRSLHARIEQWNHNFSFDAHDPCVFHSPDITGLLEHYKDPSACMFFEPLLSTPLIRTFPFSLQHICRTVICNCTTYDGIDALPIPSSMKLYLKEYHYKSKVRVLRIDAPEQQC.

Positions 1–10 are enriched in polar residues; it reads MAENNENISK. A disordered region spans residues 1-29; sequence MAENNENISKNVDVRPKTSRSRSADRKDG. A compositionally biased stretch (basic and acidic residues) spans 12–29; it reads VDVRPKTSRSRSADRKDG. The 96-residue stretch at 286 to 381 folds into the SH2 domain; the sequence is CYWGVMDKYA…FFEPLLSTPL (96 aa). One can recognise an SOCS box domain in the interval 376 to 425; the sequence is LLSTPLIRTFPFSLQHICRTVICNCTTYDGIDALPIPSSMKLYLKEYHYK.

Its pathway is protein modification; protein ubiquitination. SOCS family proteins form part of a classical negative feedback system that regulates cytokine signal transduction. Substrate-recognition component of a SCF-like ECS (Elongin BC-CUL2/5-SOCS-box protein) E3 ubiquitin-protein ligase complex which mediates the ubiquitination and subsequent proteasomal degradation of target proteins. Inhibits EGF signaling by mediating the degradation of the Tyr-phosphorylated EGF receptor/EGFR. The polypeptide is Suppressor of cytokine signaling 4 (SOCS4) (Pongo abelii (Sumatran orangutan)).